The following is a 90-amino-acid chain: Probable Fe(2+)-trafficking protein (90 aa).

Belongs to the Fe(2+)-trafficking protein family.

Functionally, could be a mediator in iron transactions between iron acquisition and iron-requiring processes, such as synthesis and/or repair of Fe-S clusters in biosynthetic enzymes. The sequence is that of Probable Fe(2+)-trafficking protein from Pseudomonas fluorescens (strain ATCC BAA-477 / NRRL B-23932 / Pf-5).